We begin with the raw amino-acid sequence, 208 residues long: ATP-dependent Clp protease proteolytic subunit (208 aa).

Residue serine 107 is the Nucleophile of the active site. Residue histidine 132 is part of the active site.

The protein belongs to the peptidase S14 family. In terms of assembly, fourteen ClpP subunits assemble into 2 heptameric rings which stack back to back to give a disk-like structure with a central cavity, resembling the structure of eukaryotic proteasomes.

It localises to the cytoplasm. The enzyme catalyses Hydrolysis of proteins to small peptides in the presence of ATP and magnesium. alpha-casein is the usual test substrate. In the absence of ATP, only oligopeptides shorter than five residues are hydrolyzed (such as succinyl-Leu-Tyr-|-NHMec, and Leu-Tyr-Leu-|-Tyr-Trp, in which cleavage of the -Tyr-|-Leu- and -Tyr-|-Trp bonds also occurs).. Its function is as follows. Cleaves peptides in various proteins in a process that requires ATP hydrolysis. Has a chymotrypsin-like activity. Plays a major role in the degradation of misfolded proteins. The polypeptide is ATP-dependent Clp protease proteolytic subunit (Methylobacterium radiotolerans (strain ATCC 27329 / DSM 1819 / JCM 2831 / NBRC 15690 / NCIMB 10815 / 0-1)).